A 197-amino-acid chain; its full sequence is Glycerol-3-phosphate acyltransferase (197 aa).

5 helical membrane-spanning segments follow: residues 2-22, 53-73, 78-98, 112-132, and 152-174; these read LDVI…AIVV, AGIT…LAWL, PVVA…PVYF, VILA…LAVA, and YMLW…AAIV.

This sequence belongs to the PlsY family. Probably interacts with PlsX.

The protein localises to the cell inner membrane. It catalyses the reaction an acyl phosphate + sn-glycerol 3-phosphate = a 1-acyl-sn-glycero-3-phosphate + phosphate. It functions in the pathway lipid metabolism; phospholipid metabolism. Its function is as follows. Catalyzes the transfer of an acyl group from acyl-phosphate (acyl-PO(4)) to glycerol-3-phosphate (G3P) to form lysophosphatidic acid (LPA). This enzyme utilizes acyl-phosphate as fatty acyl donor, but not acyl-CoA or acyl-ACP. The sequence is that of Glycerol-3-phosphate acyltransferase from Halorhodospira halophila (strain DSM 244 / SL1) (Ectothiorhodospira halophila (strain DSM 244 / SL1)).